Consider the following 367-residue polypeptide: MVKTNVTIMRGGTSKGVFFHESAMPNNKNEWEPFLLDVMGSPDKRQIDGLGGGNSLTSKVAIIKKAYTSDIDVHYTFGQVSISEEKVDFKGNCGNISAAVGPFAIEEGLVKAKEPMTAVRILNTNTNKMIIAEVEVEDGQVKYDGDVTISGVPGSGSPIYLNFHDAAGSVTGHLLPTGNSSEFLDTSQGQIEVSIIDYANPLVFVEASSIGLDGTELAEEFTDLQLAQFEELRSIAAEKCGFASRFSATKLSPAVPKLAIVAKPEKYKDSTGAWHSSVEMDLHIRMMSMQKPHQALAVTGAICTTRALSVEGAIPARIAKNHSTKVRLAHSSGIIETMVEPTGIKIVRTARRIMDGTVYTHGDYQMM.

It belongs to the PrpF family.

The chain is Putative isomerase YraM (yraM) from Bacillus subtilis (strain 168).